A 377-amino-acid polypeptide reads, in one-letter code: MRGQRSLLLGPARLCLRLLLLLGYRRRCPPLLRGLVQRWRYGKVCLRSLLYNSFGGSDTAVDAAFEPVYWLVDNVIRWFGVVFVVLVIVLTGSIVAIAYLCVLPLILRTYSVPRLCWHFFYSHWNLILIVFHYYQAITTPPGYPPQGRNDIATVSICKKCIYPKPARTHHCSICNRCVLKMDHHCPWLNNCVGHYNHRYFFSFCFFMTLGCVYCSYGSWDLFREAYAAIEKMKQLDKNKLQAVANQTYHQTPPPTFSFRERMTHKSLVYLWFLCSSVALALGALTVWHAVLISRGETSIERHINKKERRRLQAKGRVFRNPYNYGCLDNWKVFLGVDTGRHWLTRVLLPSSHLPHGNGMSWEPPPWVTAHSASVMAV.

At 1–77 (MRGQRSLLLG…VYWLVDNVIR (77 aa)) the chain is on the cytoplasmic side. The chain crosses the membrane as a helical span at residues 78 to 98 (WFGVVFVVLVIVLTGSIVAIA). Topologically, residues 99-116 (YLCVLPLILRTYSVPRLC) are lumenal. A helical membrane pass occupies residues 117–137 (WHFFYSHWNLILIVFHYYQAI). Residues 138–198 (TTPPGYPPQG…NNCVGHYNHR (61 aa)) are Cytoplasmic-facing. One can recognise a DHHC domain in the interval 155 to 205 (SICKKCIYPKPARTHHCSICNRCVLKMDHHCPWLNNCVGHYNHRYFFSFCF). Cysteine 185 serves as the catalytic S-palmitoyl cysteine intermediate. The chain crosses the membrane as a helical span at residues 199 to 219 (YFFSFCFFMTLGCVYCSYGSW). The Lumenal portion of the chain corresponds to 220 to 266 (DLFREAYAAIEKMKQLDKNKLQAVANQTYHQTPPPTFSFRERMTHKS). A helical membrane pass occupies residues 267–287 (LVYLWFLCSSVALALGALTVW). At 288–377 (HAVLISRGET…TAHSASVMAV (90 aa)) the chain is on the cytoplasmic side.

The protein belongs to the DHHC palmitoyltransferase family. Interacts with ABL1. Interacts with COPS5/JAB1. As to expression, widely expressed.

Its subcellular location is the endoplasmic reticulum membrane. It carries out the reaction L-cysteinyl-[protein] + hexadecanoyl-CoA = S-hexadecanoyl-L-cysteinyl-[protein] + CoA. In terms of biological role, palmitoyl acyltransferase that mediates palmitoylation of proteins such as PLN and ZDHHC6. Required during embryonic heart development and cardiac function, possibly by mediating palmitoylation of PLN, thereby affecting PLN phosphorylation and homooligomerization. Also required for eye development. Palmitoylates ZDHHC6, affecting the quaternary assembly of ZDHHC6, its localization, stability and function. May play a role in DNA damage response. May be involved in apoptosis regulation. Involved in the proliferation of neural stem cells by regulating the FGF/ERK pathway. The sequence is that of Palmitoyltransferase ZDHHC16 from Homo sapiens (Human).